The primary structure comprises 323 residues: Aspartate carbamoyltransferase catalytic subunit (323 aa).

Carbamoyl phosphate contacts are provided by R65 and T66. Residue K93 coordinates L-aspartate. R115, H149, and Q152 together coordinate carbamoyl phosphate. L-aspartate is bound by residues R182 and R237. Carbamoyl phosphate contacts are provided by G278 and P279.

The protein belongs to the aspartate/ornithine carbamoyltransferase superfamily. ATCase family. In terms of assembly, heterododecamer (2C3:3R2) of six catalytic PyrB chains organized as two trimers (C3), and six regulatory PyrI chains organized as three dimers (R2).

It catalyses the reaction carbamoyl phosphate + L-aspartate = N-carbamoyl-L-aspartate + phosphate + H(+). The protein operates within pyrimidine metabolism; UMP biosynthesis via de novo pathway; (S)-dihydroorotate from bicarbonate: step 2/3. Catalyzes the condensation of carbamoyl phosphate and aspartate to form carbamoyl aspartate and inorganic phosphate, the committed step in the de novo pyrimidine nucleotide biosynthesis pathway. In Aromatoleum aromaticum (strain DSM 19018 / LMG 30748 / EbN1) (Azoarcus sp. (strain EbN1)), this protein is Aspartate carbamoyltransferase catalytic subunit.